The primary structure comprises 357 residues: MARILVGLSGGVDSSVAAALLVEQGHDVVGAYMKNWVNDEGIPGECPWEQDIQDALAVAKTTGIEFRVIDLVDEYRARIVNYLIEGYRAGYTPNPDVLCNREMKFGVFLDYALEQGFDYVATGHYARRMDTPQGAFILRGRDPNKDQSYFLSLMRPDQIARAVFPLGDLLKPEVRVLAEKYGLPTARKKDSQGICFIGQVKMSDFLRHYLPDKPGNIVDTEGRTLGTHNGLHLFTMGQRKGHGVASPREGVAYVVVGKDVRRNRLILGYEDASTRGLYASRAVVGGISNTLAPLPARVMAQPRYRAKAEWASCEYLEEGKVRLGFDTPLRALAVGQVCAFYDGGKLLGGGFFESIEP.

Residues 7–14 (GLSGGVDS) and methionine 33 each bind ATP. The interaction with target base in tRNA stretch occupies residues 94–96 (NPD). Residue cysteine 99 is the Nucleophile of the active site. Cysteine 99 and cysteine 195 are joined by a disulfide. Glycine 123 is a binding site for ATP. Residues 145 to 147 (KDQ) are interaction with tRNA. Residue cysteine 195 is the Cysteine persulfide intermediate of the active site. The tract at residues 303 to 304 (RY) is interaction with tRNA.

Belongs to the MnmA/TRMU family.

It localises to the cytoplasm. The catalysed reaction is S-sulfanyl-L-cysteinyl-[protein] + uridine(34) in tRNA + AH2 + ATP = 2-thiouridine(34) in tRNA + L-cysteinyl-[protein] + A + AMP + diphosphate + H(+). Functionally, catalyzes the 2-thiolation of uridine at the wobble position (U34) of tRNA, leading to the formation of s(2)U34. The chain is tRNA-specific 2-thiouridylase MnmA from Akkermansia muciniphila (strain ATCC BAA-835 / DSM 22959 / JCM 33894 / BCRC 81048 / CCUG 64013 / CIP 107961 / Muc).